An 84-amino-acid chain; its full sequence is MERNLRKTRVGRVVSDKMDKTITVLVEDFVRHPLYGKAVKRTKKFKAHDEMNECRIGDRVRIMETKPLSKDKRWRLVQIVEKAK.

Belongs to the universal ribosomal protein uS17 family. Part of the 30S ribosomal subunit.

One of the primary rRNA binding proteins, it binds specifically to the 5'-end of 16S ribosomal RNA. The chain is Small ribosomal subunit protein uS17 from Alkaliphilus oremlandii (strain OhILAs) (Clostridium oremlandii (strain OhILAs)).